We begin with the raw amino-acid sequence, 328 residues long: Beta-ketoacyl-[acyl-carrier-protein] synthase III (328 aa).

Catalysis depends on residues Cys122 and His255. Residues 256–260 (QANVR) are ACP-binding. The active site involves Asn285.

Belongs to the thiolase-like superfamily. FabH family. As to quaternary structure, homodimer.

It is found in the cytoplasm. The enzyme catalyses malonyl-[ACP] + acetyl-CoA + H(+) = 3-oxobutanoyl-[ACP] + CO2 + CoA. It functions in the pathway lipid metabolism; fatty acid biosynthesis. Catalyzes the condensation reaction of fatty acid synthesis by the addition to an acyl acceptor of two carbons from malonyl-ACP. Catalyzes the first condensation reaction which initiates fatty acid synthesis and may therefore play a role in governing the total rate of fatty acid production. Possesses both acetoacetyl-ACP synthase and acetyl transacylase activities. Its substrate specificity determines the biosynthesis of branched-chain and/or straight-chain of fatty acids. This chain is Beta-ketoacyl-[acyl-carrier-protein] synthase III, found in Bordetella petrii (strain ATCC BAA-461 / DSM 12804 / CCUG 43448).